Reading from the N-terminus, the 535-residue chain is MGFEDLLDKVGGFGPFQLRNLVLMALPRMLLPMHFLLPVFMAAVPAHHCALPGAPANLSHQDLWLEAHLPRETDGSFSSCLRFAYPQTVPNVTLGTEVSNSGEPEGEPLTVPCSQGWEYDRSEFSSTIATEWDLVCQQRGLNKITSTCFFIGVLVGAVVYGYLSDRFGRRRLLLVAYVSSLVLGLMSAASINYIMFVVTRTLTGSALAGFTIIVLPLELEWLDVEHRTVAGVISTVFWSGGVLLLALVGYLIRSWRWLLLAATLPCVPGIISIWWVPESARWLLTQGRVEEAKKYLLSCAKLNGRPVGEGSLSQEALNNVVTMERALQRPSYLDLFRTSQLRHISLCCMMVWFGVNFSYYGLTLDVSGLGLNVYQTQLLFGAVELPSKIMVYFLVRRLGRRLTEAGMLLGAALTFGTSLLVSLETKSWITALVVVGKAFSEAAFTTAYLFTSELYPTVLRQTGLGLTALMGRLGASLAPLAALLDGVWLLLPKVAYGGIALVAACTALLLPETKKAQLPETIQDVERKSTQEEDV.

The next 12 membrane-spanning stretches (helical) occupy residues 21–41, 144–164, 178–198, 202–222, 232–252, 257–277, 344–364, 375–395, 402–422, 429–449, 464–484, and 489–509; these read LVLM…PVFM, ITST…GYLS, VSSL…MFVV, LTGS…LEWL, VIST…GYLI, WLLL…WWVP, ISLC…GLTL, QTQL…YFLV, LTEA…LLVS, ITAL…TAYL, LGLT…AALL, and LLLP…TALL.

Belongs to the major facilitator (TC 2.A.1) superfamily. Organic cation transporter (TC 2.A.1.19) family. In terms of tissue distribution, expressed in liver and kidney. Expressed at low levels in adipose tissue. Expressed in fetal liver. In kidney, expressed at the brush border of the proximal tubule S3 segment (S3) in the outer stripe and medullary rays. In kidney, expression is higher in female than male.

It localises to the basolateral cell membrane. It is found in the apical cell membrane. Its subcellular location is the cell membrane. It carries out the reaction orotate(out) + L-glutamate(in) = orotate(in) + L-glutamate(out). The catalysed reaction is 3',5'-cyclic GMP(in) = 3',5'-cyclic GMP(out). It catalyses the reaction GMP(in) = GMP(out). The enzyme catalyses 2'-deoxyguanosine(in) = 2'-deoxyguanosine(out). It carries out the reaction GDP(in) = GDP(out). The catalysed reaction is guanosine(in) = guanosine(out). It catalyses the reaction GTP(in) = GTP(out). The enzyme catalyses 3',5'-cyclic AMP(in) = 3',5'-cyclic AMP(out). It carries out the reaction creatinine(in) = creatinine(out). The catalysed reaction is prostaglandin E2(out) = prostaglandin E2(in). It catalyses the reaction 2-oxoglutarate(in) = 2-oxoglutarate(out). The enzyme catalyses glutarate(in) = glutarate(out). It carries out the reaction urate(out) = urate(in). The catalysed reaction is estrone 3-sulfate(out) = estrone 3-sulfate(in). In terms of biological role, functions as a Na(+)-independent bidirectional multispecific transporter. Contributes to the renal and hepatic elimination of endogenous organic compounds from the systemic circulation into the urine and bile, respectively. Capable of transporting a wide range of purine and pyrimidine nucleobases, nucleosides, and nucleotides with cGMP, 2'deoxyguanosine and GMP being the preferred substrates. Functions as a pH- and chloride-independent cGMP bidirectional facilitative transporter that can regulate both intracellular and extracellular levels of cGMP and may be involved in cGMP signaling pathways. Mediates orotate/glutamate bidirectional exchange and most likely display a physiological role in hepatic release of glutamate into the blood. Involved in renal secretion and possible reabsorption of creatinine. Able to uptake prostaglandin E2 (PGE2) and may contribute to PGE2 renal excretion. Also transports alpha-ketoglutarate and urate. Apart from the orotate/glutamate exchange, the counterions for the uptake of other SLC22A7/OAT2 substrates remain to be identified. This is Solute carrier family 22 member 7 from Rattus norvegicus (Rat).